Reading from the N-terminus, the 419-residue chain is Tyrosine--tRNA ligase (419 aa).

Tyrosine 34 is an L-tyrosine binding site. The 'HIGH' region signature appears at 39–48 (PTADSLHLGH). Positions 169 and 173 each coordinate L-tyrosine. Positions 229–233 (KFGKS) match the 'KMSKS' region motif. ATP is bound at residue lysine 232. One can recognise an S4 RNA-binding domain in the interval 352–419 (LNIIDLLVTS…KKKYFVLNFK (68 aa)).

Belongs to the class-I aminoacyl-tRNA synthetase family. TyrS type 1 subfamily. As to quaternary structure, homodimer.

The protein resides in the cytoplasm. The catalysed reaction is tRNA(Tyr) + L-tyrosine + ATP = L-tyrosyl-tRNA(Tyr) + AMP + diphosphate + H(+). Catalyzes the attachment of tyrosine to tRNA(Tyr) in a two-step reaction: tyrosine is first activated by ATP to form Tyr-AMP and then transferred to the acceptor end of tRNA(Tyr). This chain is Tyrosine--tRNA ligase, found in Streptococcus agalactiae serotype Ia (strain ATCC 27591 / A909 / CDC SS700).